Reading from the N-terminus, the 305-residue chain is uncharacterized protein (305 aa).

A run of 10 helical transmembrane segments spans residues 4–24 (LNIYIMLLGFSIFTGATFNLA), 38–58 (AWRFGLAAAVMLIILIFTEGI), 67–87 (AVSYIVLGIIGIFGFNALFFV), 95–115 (VNGALIMGLNPLLTAILARII), 125–145 (VLGIFFAFIGVLLVITQGSIE), 152–172 (ISGGDLIIFTGNVCWALYGVL), 183–203 (LSTTTYTMVIGAVSLIVVSLF), 215–235 (IGVWGAIAFMAFFTSVLGYLW), 250–270 (LFFNLVPVVTMIISFAVGTPI), and 272–292 (VFQVIGAVLVILGVLTASGVI). EamA domains lie at 15–140 (IFTG…LVIT) and 164–290 (VCWA…TASG).

This sequence belongs to the EamA transporter family.

Its subcellular location is the cell membrane. This is an uncharacterized protein from Bacillus subtilis (strain 168).